The sequence spans 88 residues: Small ribosomal subunit protein bS20 (88 aa).

Belongs to the bacterial ribosomal protein bS20 family.

Its function is as follows. Binds directly to 16S ribosomal RNA. The polypeptide is Small ribosomal subunit protein bS20 (Methylorubrum extorquens (strain CM4 / NCIMB 13688) (Methylobacterium extorquens)).